The sequence spans 166 residues: UPF0561 protein C2orf68 (166 aa).

Residues 32-107 form a disordered region; it reads NQIARDDYDK…SELEPSGHQL (76 aa). 2 stretches are compositionally biased toward basic and acidic residues: residues 34-49 and 73-85; these read IARDDYDKKVKQAAKE and RHRDVSAHPRNPD. Low complexity predominate over residues 91–104; that stretch reads ESSSSGGSELEPSG.

This sequence belongs to the UPF0561 family.

The chain is UPF0561 protein C2orf68 (C2orf68) from Homo sapiens (Human).